A 279-amino-acid polypeptide reads, in one-letter code: Thioredoxin domain-containing protein plp1 (279 aa).

Over residues 56 to 70 (RKEDTQDYNEPELHN) the composition is skewed to basic and acidic residues. Positions 56-75 (RKEDTQDYNEPELHNSNDPT) are disordered. Residues 137 to 248 (FLTVENEREV…LEFRLLKSSA (112 aa)) form the Thioredoxin domain. The span at 254 to 267 (EESSSNKSIYHDEL) shows a compositional bias: basic and acidic residues. The disordered stretch occupies residues 254-279 (EESSSNKSIYHDELQNNQSDDSDFFE). Phosphoserine is present on residues Ser-272 and Ser-275.

Belongs to the phosducin family.

It localises to the cytoplasm. It is found in the nucleus. Functionally, inhibits early G-protein signaling events following pheromone stimulation. May help create heterodimerizable beta-tubulin by facilitating the efficient transfer of nascent beta-tubulin polypeptides to the folding apparatus. The protein is Thioredoxin domain-containing protein plp1 (plp1) of Schizosaccharomyces pombe (strain 972 / ATCC 24843) (Fission yeast).